We begin with the raw amino-acid sequence, 1264 residues long: TBC1 domain family member 9 (1264 aa).

GRAM domains are found at residues 146-213 (VKFH…EKNA) and 293-361 (ERYR…EKAD). The segment at 410–456 (KEFSGSCNSSDDEVYSRPSSLVSSSPQRSTSSDADGERPFNLNGNSV) is disordered. Residues 425 to 441 (SRPSSLVSSSPQRSTSS) show a composition bias toward low complexity. The 188-residue stretch at 515-702 (GIPESMRGEL…VVVDCFFYEG (188 aa)) folds into the Rab-GAP TBC domain. Positions 886-921 (HSDVLASRLFQLLDENGDSLINFREFVSGLSAACHG) constitute an EF-hand domain. Positions 1119–1138 (SEEHSLGGQMEDIKLEDSSP) are enriched in basic and acidic residues. Residues 1119–1162 (SEEHSLGGQMEDIKLEDSSPRDNGACSSMLISDDDTKDDSSMSS) are disordered.

Its function is as follows. May act as a GTPase-activating protein for Rab family protein(s). The chain is TBC1 domain family member 9 (Tbc1d9) from Mus musculus (Mouse).